An 83-amino-acid polypeptide reads, in one-letter code: Small ribosomal subunit protein bS16 (83 aa).

This sequence belongs to the bacterial ribosomal protein bS16 family.

The polypeptide is Small ribosomal subunit protein bS16 (Albidiferax ferrireducens (strain ATCC BAA-621 / DSM 15236 / T118) (Rhodoferax ferrireducens)).